Reading from the N-terminus, the 165-residue chain is Phosphopantetheine adenylyltransferase (165 aa).

Ser-11 serves as a coordination point for substrate. Residues 11–12 (SF) and His-19 each bind ATP. Substrate contacts are provided by Lys-43, Thr-76, and Arg-90. ATP contacts are provided by residues 91–93 (GIR), Glu-101, and 126–132 (FSFISSS).

This sequence belongs to the bacterial CoaD family. Homohexamer. Mg(2+) serves as cofactor.

The protein localises to the cytoplasm. It carries out the reaction (R)-4'-phosphopantetheine + ATP + H(+) = 3'-dephospho-CoA + diphosphate. It functions in the pathway cofactor biosynthesis; coenzyme A biosynthesis; CoA from (R)-pantothenate: step 4/5. Reversibly transfers an adenylyl group from ATP to 4'-phosphopantetheine, yielding dephospho-CoA (dPCoA) and pyrophosphate. In Latilactobacillus sakei subsp. sakei (strain 23K) (Lactobacillus sakei subsp. sakei), this protein is Phosphopantetheine adenylyltransferase.